The following is a 223-amino-acid chain: UPF0173 metal-dependent hydrolase THA_544 (223 aa).

Belongs to the UPF0173 family.

This Thermosipho africanus (strain TCF52B) protein is UPF0173 metal-dependent hydrolase THA_544.